A 596-amino-acid polypeptide reads, in one-letter code: Glomulin (596 aa).

N-acetylalanine is present on A2. The alpha-helical region with structural similarity to HEAT repeats stretch occupies residues 2-555 (AVEELQSIIK…EEIPSMPPEM (554 aa)). Residues 299-596 (IDQLPMVLSP…STSEENVGIK (298 aa)) are important for interaction with RBX1.

In terms of assembly, interacts with FKBP4 and FKBP1A. Interacts with RBX1 (via RING domain). Identified in complexes that contain RBX1 plus one of the cullins CUL1, CUL2, CUL3, and CUL4A. Identified in a SCF complex composed of CUL1, RBX1, SKP1, FBXW7 and GLMN. Component of a SCF-like complex consisting of CUL7, RBX1, SKP1, FBXW8 and GLMN. Interacts with unphosphorylated MET and is released upon MET phosphorylation. In terms of processing, phosphorylated on tyrosine residues. As to expression, ubiquitous. Detected in embryonic vasculature and embryonic perichondrium, and in adult eye, brain, heart, testis, kidney, smooth muscle and skeletal muscle.

Regulatory component of cullin-RING-based SCF (SKP1-Cullin-F-box protein) E3 ubiquitin-protein ligase complexes. Inhibits E3 ubiquitin ligase activity by binding to the RING domain of RBX1 and inhibiting its interaction with the E2 ubiquitin-conjugating enzyme CDC34. Inhibits RBX1-mediated neddylation of CUL1. Required for normal stability and normal cellular levels of key components of SCF ubiquitin ligase complexes, including FBXW7, RBX1, CUL1, CUL2, CUL3, CUL4A, and thereby contributes to the regulation of CCNE1 and MYC levels. Essential for normal development of the vasculature. Contributes to the regulation of RPS6KB1 phosphorylation. This chain is Glomulin (Glmn), found in Mus musculus (Mouse).